The chain runs to 578 residues: Dapdiamide synthesis protein DdaD (578 aa).

Residues 498 to 573 (ESISATEHQI…KMAAWLDASS (76 aa)) enclose the Carrier domain. Ser-533 carries the O-(pantetheine 4'-phosphoryl)serine modification.

It belongs to the ATP-dependent AMP-binding enzyme family. It depends on pantetheine 4'-phosphate as a cofactor.

It participates in antibiotic biosynthesis. Its function is as follows. Involved in dapdiamide antibiotics biosynthesis. Activates and sequesters N-beta-fumaramoyl-DAP as a covalently tethered thioester for subsequent oxidative modification of the fumaramoyl group. This is Dapdiamide synthesis protein DdaD from Enterobacter agglomerans (Erwinia herbicola).